Here is a 1191-residue protein sequence, read N- to C-terminus: Homeodomain-interacting protein kinase 3 (1191 aa).

A Glycyl lysine isopeptide (Lys-Gly) (interchain with G-Cter in SUMO2) cross-link involves residue lysine 27. The region spanning 197 to 525 (YEVLDFLGRG…PIETLNHPFV (329 aa)) is the Protein kinase domain. ATP-binding positions include 203 to 211 (LGRGTFGQV) and lysine 226. Catalysis depends on aspartate 322, which acts as the Proton acceptor. Phosphotyrosine is present on tyrosine 359. The segment at 766-920 (QNRSNSLQNT…NSMSDDEQES (155 aa)) is interaction with AR. The interaction with FAS stretch occupies residues 774 to 867 (NTNVPHSAFI…SPRPSLRECK (94 aa)). A disordered region spans residues 801–828 (TQDNHTSEGEARTCHEASVRQDSSVSDK). Residues 802–828 (QDNHTSEGEARTCHEASVRQDSSVSDK) show a composition bias toward basic and acidic residues. Residues 846 to 856 (ITISSDTDDEE) form an interaction with UBL1 region. Over residues 888 to 905 (SSPDSTLSTSSSGQSSPS) the composition is skewed to low complexity. Disordered regions lie at residues 888–960 (SSPD…TCAG) and 993–1022 (TCQP…KPTS). Residues 1008–1022 (NQPSASAARQQKPTS) are compositionally biased toward polar residues.

The protein belongs to the protein kinase superfamily. CMGC Ser/Thr protein kinase family. HIPK subfamily. As to quaternary structure, interacts with Nkx1-2. Interacts with FAS and DAXX. Probably part of a complex consisting of HIPK3, FAS and FADD. Interacts with UBL1/SUMO-1. Interacts with and stabilizes ligand-bound androgen receptor (AR). In terms of processing, autophosphorylated. Autophosphorylation is not required for catalytic activity. Post-translationally, may be sumoylated.

The protein resides in the nucleus. It catalyses the reaction L-seryl-[protein] + ATP = O-phospho-L-seryl-[protein] + ADP + H(+). The catalysed reaction is L-threonyl-[protein] + ATP = O-phospho-L-threonyl-[protein] + ADP + H(+). Functionally, seems to negatively regulate apoptosis by promoting FADD phosphorylation. Enhances androgen receptor-mediated transcription. May act as a transcriptional corepressor for NK homeodomain transcription factors. This chain is Homeodomain-interacting protein kinase 3 (Hipk3), found in Rattus norvegicus (Rat).